Here is a 498-residue protein sequence, read N- to C-terminus: Polyphosphate:AMP phosphotransferase (498 aa).

2 PPK2 regions span residues 11-234 (IDDD…MQAA) and 269-491 (LSKE…LEKA).

Belongs to the polyphosphate kinase 2 (PPK2) family. Class II subfamily.

It catalyses the reaction [phosphate](n) + ADP = [phosphate](n+1) + AMP. Its function is as follows. Uses inorganic polyphosphate (polyP) as a donor to convert AMP to ADP. Can also convert GMP to GDP, with lower efficiency. This Pseudomonas syringae pv. tomato (strain ATCC BAA-871 / DC3000) protein is Polyphosphate:AMP phosphotransferase.